Consider the following 228-residue polypeptide: MKLIELCVLCAIAFAAPRQKRLTVGTIAVTGGVGGASGCVVTGNVLYANGFRLRELSASEQQELTNYEKQVAEYKASVKQILKERQEKLKSRMSGKKEEKAAVTSTKDEDLPKPPQKPSFCTEDDTTQFYFDGCMVQGNKVYVGNTFARDLDQNEIEELKEFEKKQTVYQEYVQKQIQQQVSNLFGGADFFSSFFGDAKDQTTTTVAPVLPEDAPEQPAVPNFCTRIY.

A signal peptide spans 1-15 (MKLIELCVLCAIAFA). Over residues 88–112 (KLKSRMSGKKEEKAAVTSTKDEDLP) the composition is skewed to basic and acidic residues. The interval 88 to 119 (KLKSRMSGKKEEKAAVTSTKDEDLPKPPQKPS) is disordered. A disulfide bond links Cys134 and Cys224.

The protein belongs to the protease inhibitor I33 family.

Its subcellular location is the secreted. Functionally, aspartyl protease inhibitor. This chain is Aspartyl protease inhibitor, found in Trichostrongylus colubriformis (Black scour worm).